An 866-amino-acid chain; its full sequence is Coiled-coil domain-containing protein 178 (866 aa).

Positions 1–21 are disordered; it reads MPENEKEPAQPTTNEDALDTG. Coiled coils occupy residues 157-266, 292-403, 439-480, 514-539, 570-631, and 665-705; these read ELKK…DYMA, EVME…DQYC, KDLT…EEEV, KTEE…LKKL, RRQV…LLKK, and EKCI…REHV.

The polypeptide is Coiled-coil domain-containing protein 178 (Ccdc178) (Mus musculus (Mouse)).